A 1158-amino-acid polypeptide reads, in one-letter code: MATRKDTEEEQVVPSEEDEANVRAVQAHYLRSPSPSQYSMVSDAETESIFMEPIHLSSAIAAKQIINEELKPPGVRADAECPGMLESAEQLLVEDLYNRVREKMDDTSLYNTPCVLDLQRALVQDRQEAPWNEVDEVWPNVFIAEKSVAVNKGRLKRLGITHILNAAHGTGVYTGPEFYTGLEIQYLGVEVDDFPEVDISQHFRKASEFLDEALLTYRGKVLVSSEMGISRSAVLVVAYLMIFHNMAILEALMTVRKKRAIYPNEGFLKQLRELNEKLMEEREEDYGREGGSAEAEEGEGTGSMLGARVHALTVEEEDDSASHLSGSSLGKATQASKPLTLIDEEEEEKLYEQWKKGQGLLSDKVPQDGGGWRSASSGQGGEELEDEDVERIIQEWQSRNERYQAEGYRRWGREEEKEEESDAGSSVGRRRRTLSESSAWESVSSHDIWVLKQQLELNRPDHGRRRRADSMSSESTWDAWNERLLEIEKEASRRYHAKSKREEAADRSSEAGSRVREDDEDSVGSEASSFYNFCSRNKDKLTALERWKIKRIQFGFHKKDLGAGDSSGEPGAEEAVGEKNPSDVSLTAYQAWKLKHQKKVGSENKEEVVELSKGEDSALAKKRQRRLELLERSRQTLEESQSMASWEADSSTASGSIPLSAFWSADPSVSADGDTTSVLSTQSHRSHLSQAASNIAGCSTSNPTTPLPNLPVGPGDTISIASIQNWIANVVSETLAQKQNEMLLLSRSPSVASMKAVPAASCLGDDQVSMLSGHSSSSLGGCLLPQSQARPSSDMQSVLSCNTTLSSPAESCRSKVRGTSKPIFSLFADNVDLKELGRKEKEMQMELREKMSEYKMEKLASDNKRSSLFKKKKVKEDEDDGVGDGDEDTDSAIGSFRYSSRSNSQKPETDTCSSLAVCDHYASGSRVGKEMDSSINKWLSGLRTEEKPPFQSDWSGSSRGKYTRSSLLRETESKSSSYKFSKSQSEEQDTSSYHEANGNSVRSTSRFSSSSTREGREMHKFSRSTYNETSSSREESPEPYFFRRTPESSEREESPEPQRPNWARSRDWEDVEESSKSDFSEFGAKRKFTQSFMRSEEEGEKERTENREEGRFASGRRSQYRRSTDREEEEEMDDEAIIAAWRRRQEETRTKLQKRRED.

Disordered regions lie at residues 1-21, 280-303, 315-337, 360-392, 407-444, 492-527, 559-582, 597-622, 873-915, and 940-1135; these read MATR…DEAN, EERE…GTGS, EEED…QASK, LLSD…VERI, GYRR…ESVS, SRRY…GSEA, KDLG…KNPS, QKKV…LAKK, KVKE…CSSL, and SGLR…MDDE. The span at 8 to 19 shows a compositional bias: acidic residues; it reads EEEQVVPSEEDE. Residues 132 to 280 form the Tyrosine-protein phosphatase domain; sequence NEVDEVWPNV…LRELNEKLME (149 aa). The segment covering 322–337 has biased composition (polar residues); it reads SHLSGSSLGKATQASK. At S377 the chain carries Phosphoserine. T433 carries the post-translational modification Phosphothreonine. Residues 435 to 444 are compositionally biased toward low complexity; it reads SESSAWESVS. Over residues 500–517 the composition is skewed to basic and acidic residues; sequence KREEAADRSSEAGSRVRE. Phosphoserine is present on S509. Positions 600–619 are enriched in basic and acidic residues; the sequence is VGSENKEEVVELSKGEDSAL. Positions 877 to 890 are enriched in acidic residues; that stretch reads DEDDGVGDGDEDTD. 2 stretches are compositionally biased toward polar residues: residues 897-914 and 952-966; these read RYSS…TCSS and SDWS…TRSS. Positions 974-983 are enriched in low complexity; sequence KSSSYKFSKS. S985 carries the post-translational modification Phosphoserine. Positions 990–999 are enriched in polar residues; sequence TSSYHEANGN. A compositionally biased stretch (low complexity) spans 1000–1012; it reads SVRSTSRFSSSST. The residue at position 1036 (S1036) is a Phosphoserine. 3 stretches are compositionally biased toward basic and acidic residues: residues 1044–1056, 1064–1079, and 1094–1111; these read RTPE…ESPE, RSRD…KSDF, and RSEE…EEGR. Residues 1126-1135 are compositionally biased toward acidic residues; sequence REEEEEMDDE.

Belongs to the protein-tyrosine phosphatase family. Non-receptor class dual specificity subfamily.

The protein resides in the cytoplasm. It localises to the myofibril. The protein localises to the sarcomere. Its function is as follows. May be required for myofiber maturation. The polypeptide is Serine/threonine/tyrosine-interacting-like protein 2 (Homo sapiens (Human)).